The primary structure comprises 241 residues: Ribosome assembly factor mrt4 (241 aa).

The protein belongs to the universal ribosomal protein uL10 family. Associates with the pre-60S ribosomal particle.

Its subcellular location is the nucleus. It is found in the nucleolus. The protein resides in the cytoplasm. In terms of biological role, component of the ribosome assembly machinery. Nuclear paralog of the ribosomal protein P0, it binds pre-60S subunits at an early stage of assembly in the nucleolus, and is replaced by P0 in cytoplasmic pre-60S subunits and mature 80S ribosomes. This is Ribosome assembly factor mrt4 from Schizosaccharomyces pombe (strain 972 / ATCC 24843) (Fission yeast).